Reading from the N-terminus, the 409-residue chain is Immunity-related GTPase family M protein 1 (409 aa).

The 177-residue stretch at 75–251 folds into the IRG-type G domain; sequence IPVSIFVTGD…PKLRDTLHKD (177 aa). GTP contacts are provided by residues 84–91, 109–113, and 191–193; these read DSGNGMSS, TGVVR, and KLD. A Phosphoserine modification is found at Ser-202. 232–234 provides a ligand contact to GTP; it reads SSL. Residue Lys-270 forms a Glycyl lysine isopeptide (Lys-Gly) (interchain with G-Cter in ubiquitin) linkage. The interval 350-374 is alpha-K amphipathic helix; the sequence is KLRLMTCAIVNAFFRLLRFLPCVCC.

This sequence belongs to the TRAFAC class dynamin-like GTPase superfamily. IRG family. Interacts with ULK1; promoting the coassembly of ULK1 and BECN1. Interacts with BECN1; enhancing BECN1-interacting partners and influencing the composition of the BECN1 complex. Interacts with ATG16L1. Interacts with NOD2; promoting Irgm1 'Lys-63'-linked polyubiquitination, which is required for interactions with the core autophagy factors. Interacts with STX17; promoting STX17 recruitment to autophagosomes. Interacts with ATG8 proteins (GABARAP, GABARAPL1, GABARAPL2, MAP1LC3A, MAP1LC3B and MAP1LC3C); promoting STX17 recruitment to autophagosomes. Interacts with TFEB; promoting association between TFEB and PPP3CB and TFEB dephosphorylation. Interacts with PPP3CB; promoting association between TFEB and PPP3CB and TFEB dephosphorylation. Interacts with NLRP3; preventing NLRP3 inflammasome assembly and promoting SQSTM1/p62-dependent autophagic degradation of NLRP3. Interacts with CGAS; promoting SQSTM1/p62-dependent autophagic degradation of CGAS. Interacts with RIGI/RIG-I; promoting SQSTM1/p62-dependent autophagic degradation of RIGI/RIG-I. Interacts with NOD1; promoting SQSTM1/p62-dependent autophagic degradation of RIGI/RIG-I. Interacts with NOD2; promoting SQSTM1/p62-dependent autophagic degradation of RIGI/RIG-I. Interacts with RIPK2; promoting SQSTM1/p62-dependent autophagic degradation of RIGI/RIG-I. Interacts with PIK3CA. In terms of processing, palmitoylated on C-terminal Cys residues. Palmitoylation, together with the alpha-K amphipathic helix, which binds phosphatidylinositol, mediate binding to membranes. Ubiquitinated via 'Lys-63'-linked polyubiquitination in a NOD2-dependent process. 'Lys-63'-linked polyubiquitination is required for interactions with the core autophagy factors. Ubiquitination at Lys-270 by the DCX(WDR77) complex, also named CLR4(WDR77) complex, in intestinal cells, leading to its degradation by the proteasome. In terms of tissue distribution, expressed in lung and primary macrophages.

Its subcellular location is the golgi apparatus membrane. The protein resides in the cell membrane. It localises to the cytoplasmic vesicle. It is found in the phagosome membrane. The protein localises to the autophagosome membrane. Its subcellular location is the lysosome membrane. The protein resides in the late endosome membrane. It localises to the mitochondrion membrane. It is found in the lipid droplet. The protein localises to the cell projection. Its subcellular location is the phagocytic cup. It carries out the reaction GTP + H2O = GDP + phosphate + H(+). Functionally, immunity-related GTPase that plays important roles in innate immunity and inflammatory response. Acts as a dynamin-like protein that binds to intracellular membranes and promotes remodeling and trafficking of those membranes. Required for clearance of acute protozoan and bacterial infections by interacting with autophagy and lysosome regulatory proteins, thereby promoting the fusion of phagosomes with lysosomes for efficient degradation of cargo including microbes. Regulates selective autophagy, including xenophagy and mitophagy, both directly and indirectly. Directly regulates autophagy by acting as a molecular adapter that promotes the coassembly of the core autophagy machinery to mediate antimicrobial defense: Irgm1 (1) activates AMPK, which in turn phosphorylates ULK1 and BECN1 to induce autophagy, (2) promotes the coassembly of ULK1 and BECN1, enhancing BECN1-interacting partners and (3) influences the composition of the BECN1 complex, by competing with the negative regulators BCL2 and RUBCN, to trigger autophagy. Also activates autophagy by promoting recruitment of STX17 to autophagosomes. In collaboration with ATG8 proteins, regulate lysosomal biogenesis, a fundamental process for any autophagic pathway, by promoting TFEB dephosphorylation. Also modulates autophagy by assisting with autophagosome formation and preventing lysosomal deacidification. Regulates autophagy by affecting mitochondrial fusion and fission. Also involved in M1 macrophage activation for the production of proinflammatory cytokines. While activating autophagy, acts as a key negative regulator of the inflammatory and interferon responses both by (1) promoting mitophagy and (2) mediating autophagy-dependent degradation of effectors of the inflammatory response. Promotes degradation of damaged and IFNG/IFN-gamma-stressed mitochondria via mitophagy, preventing cytosolic release of ligands that activate inflammation. Negatively regulates interferon-signaling in hematopoietic stem cells, preserving hematopoietic stem cell number and function. Promotes expansion of activated CD4(+) T-cells by inhibiting IFNG/IFN-gamma signaling, thereby preventing Ifng-mediated cell death of CD4(+) T-cells. Acts as a suppressor of inflammation by promoting recruitment of inflammation effectors, such as CGAS, RIGI/RIG-I and NLRP3, to autophagosome membranes, leading to their SQSTM1/p62-dependent autophagic degradation. Also directly inhibits assembly of the NLRP3 inflammasome by preventing the association between NLRP3 and PYCARD. Acts as a negative regulator of antiviral innate immune response by suppressing the RIPK2-dependent pro-inflammatory response: mediates recruitment of RIPosomes, composed of RIPK2 and NOD1 or NOD2, to autophagosome membranes, promoting their SQSTM1/p62-dependent autophagic degradation. The sequence is that of Immunity-related GTPase family M protein 1 from Mus musculus (Mouse).